The following is a 195-amino-acid chain: NADH-ubiquinone oxidoreductase subunit 9 (195 aa).

It belongs to the complex I 30 kDa subunit family. As to quaternary structure, complex I is composed of about 30 different subunits.

The protein localises to the mitochondrion inner membrane. The catalysed reaction is a ubiquinone + NADH + 5 H(+)(in) = a ubiquinol + NAD(+) + 4 H(+)(out). Its function is as follows. Core subunit of the mitochondrial membrane respiratory chain NADH dehydrogenase (Complex I) that is believed to belong to the minimal assembly required for catalysis. Complex I functions in the transfer of electrons from NADH to the respiratory chain. The immediate electron acceptor for the enzyme is believed to be ubiquinone. The chain is NADH-ubiquinone oxidoreductase subunit 9 (NAD9) from Acanthamoeba castellanii (Amoeba).